Consider the following 106-residue polypeptide: MKQDIYINIKAFDCSLLEECVRKFVDELKRSSAKLSGPIALPRKDSKFIVNRSPHVDKKSREQFEMRTSRRLIVLHDLTPTMMQMLTGLSFSAGVEVDLKVKEVKV.

This sequence belongs to the universal ribosomal protein uS10 family. In terms of assembly, part of the 30S ribosomal subunit.

Its function is as follows. Involved in the binding of tRNA to the ribosomes. This Wolbachia sp. subsp. Drosophila simulans (strain wRi) protein is Small ribosomal subunit protein uS10.